The chain runs to 477 residues: Ketoisovalerate oxidoreductase subunit VorA (477 aa).

Heterotrimer of the VorA, VorB and VorC subunits.

It catalyses the reaction 3-methyl-2-oxobutanoate + 2 oxidized [2Fe-2S]-[ferredoxin] + CoA = 2-methylpropanoyl-CoA + 2 reduced [2Fe-2S]-[ferredoxin] + CO2 + H(+). The sequence is that of Ketoisovalerate oxidoreductase subunit VorA (vorA) from Methanothermobacter thermautotrophicus (strain ATCC 29096 / DSM 1053 / JCM 10044 / NBRC 100330 / Delta H) (Methanobacterium thermoautotrophicum).